The primary structure comprises 201 residues: Retinol binding protein 4 (201 aa).

An N-terminal signal peptide occupies residues 1-18 (MAWVWALVLLAALGSARA). 3 cysteine pairs are disulfide-bonded: C22–C178, C88–C192, and C138–C147. Residue Q116 coordinates substrate. The residue at position 139 (R139) is an Omega-N-methylarginine.

It belongs to the calycin superfamily. Lipocalin family. Interacts with TTR. Interaction with TTR prevents its loss by filtration through the kidney glomeruli. Interacts with STRA6. Highly expressed in liver. Also expressed in adipose tissue. Expressed by endometrium from days 16-25 and by unattached chorioallantois from days 30-36 during pregnancy.

It is found in the secreted. Its function is as follows. Retinol-binding protein that mediates retinol transport in blood plasma. Delivers retinol from the liver stores to the peripheral tissues. Transfers the bound all-trans retinol to STRA6, that then facilitates retinol transport across the cell membrane. The chain is Retinol binding protein 4 from Felis catus (Cat).